The sequence spans 429 residues: Ribosomal RNA small subunit methyltransferase B (429 aa).

S-adenosyl-L-methionine contacts are provided by residues 254–260, D277, D303, and D322; that span reads CAAPGGK. C375 acts as the Nucleophile in catalysis. The segment at 397 to 419 is disordered; the sequence is ALSETGTPDQPGQQNLPGGEEGD. The span at 400 to 412 shows a compositional bias: polar residues; sequence ETGTPDQPGQQNL.

The protein belongs to the class I-like SAM-binding methyltransferase superfamily. RsmB/NOP family.

Its subcellular location is the cytoplasm. It catalyses the reaction cytidine(967) in 16S rRNA + S-adenosyl-L-methionine = 5-methylcytidine(967) in 16S rRNA + S-adenosyl-L-homocysteine + H(+). Specifically methylates the cytosine at position 967 (m5C967) of 16S rRNA. The protein is Ribosomal RNA small subunit methyltransferase B of Salmonella paratyphi A (strain ATCC 9150 / SARB42).